A 110-amino-acid polypeptide reads, in one-letter code: Ribonuclease P protein component 4 (110 aa).

Cys65, Cys68, Cys94, and Cys97 together coordinate Zn(2+).

Belongs to the eukaryotic/archaeal RNase P protein component 4 family. Consists of a catalytic RNA component and at least 4-5 protein subunits. Requires Zn(2+) as cofactor.

The protein resides in the cytoplasm. It carries out the reaction Endonucleolytic cleavage of RNA, removing 5'-extranucleotides from tRNA precursor.. Part of ribonuclease P, a protein complex that generates mature tRNA molecules by cleaving their 5'-ends. This is Ribonuclease P protein component 4 from Methanococcus maripaludis (strain C7 / ATCC BAA-1331).